A 110-amino-acid polypeptide reads, in one-letter code: MAQINIEITYAFPEHYYLKKFTLDEGTTVQSAILQSGILQQFTDIDLRENKIGIFSRPVKLTDSLNDGDRIEIYRPLLADPKEIRRKRAAQQAKDQEEKKKAEKSANKEN.

Positions 86–110 (RKRAAQQAKDQEEKKKAEKSANKEN) are disordered. Residues 94–110 (KDQEEKKKAEKSANKEN) show a composition bias toward basic and acidic residues.

This sequence belongs to the UPF0125 (RnfH) family.

In Mannheimia succiniciproducens (strain KCTC 0769BP / MBEL55E), this protein is Protein RnfH.